Consider the following 324-residue polypeptide: Elongation factor Ts, mitochondrial (324 aa).

The transit peptide at 1–44 directs the protein to the mitochondrion; that stretch reads MSLLRSLRFFPVACTGRSARAVLLQPSQPWHTLHAGPSLSSSAS. Lysine 75 and lysine 132 each carry N6-succinyllysine. A Phosphoserine modification is found at serine 269.

This sequence belongs to the EF-Ts family.

It is found in the mitochondrion. Functionally, associates with the EF-Tu.GDP complex and induces the exchange of GDP to GTP. It remains bound to the aminoacyl-tRNA.EF-Tu.GTP complex up to the GTP hydrolysis stage on the ribosome. This Rattus norvegicus (Rat) protein is Elongation factor Ts, mitochondrial (Tsfm).